Here is a 233-residue protein sequence, read N- to C-terminus: Tapetum-specific methyltransferase 1 (233 aa).

Lysine 8 contacts substrate. S-adenosyl-L-methionine contacts are provided by residues valine 52, glutamate 74, 76–77 (GV), serine 82, aspartate 100, and alanine 129. Aspartate 150 lines the substrate pocket. Aspartate 150 serves as a coordination point for a divalent metal cation. Aspartate 152 serves as a coordination point for S-adenosyl-L-methionine. The a divalent metal cation site is built by aspartate 176 and asparagine 177.

The protein belongs to the class I-like SAM-binding methyltransferase superfamily. Cation-dependent O-methyltransferase family. CCoAMT subfamily. The cofactor is a divalent metal cation. As to expression, expressed in inflorescences and flower buds. Not detected in roots, leaves or stems. Located exclusively in the tapetum of developing stamen.

Its pathway is aromatic compound metabolism; phenylpropanoid biosynthesis. In terms of biological role, methyltransferase involved in phenylpropanoid polyamine conjugate biosynthesis. In vivo, methylates only one of the 5-hydroxyferuloyl moieties of N1,N5,N10-tri-(hydroxyferuloyl)-spermidine, while is able in vitro to convert all three 5-hydroxyferuloyl residues to the corresponding sinapoyl moieties and to methylate caffeoyl CoA and tricaffeoyl spermidine. This Arabidopsis thaliana (Mouse-ear cress) protein is Tapetum-specific methyltransferase 1 (TSM1).